An 82-amino-acid chain; its full sequence is ATP synthase subunit c, chloroplastic (82 aa).

Helical transmembrane passes span 3-23 (PLISAASVLAAGLAVGLASIG) and 57-77 (FAFMESLTIYGLVVALALLFA).

It belongs to the ATPase C chain family. In terms of assembly, F-type ATPases have 2 components, F(1) - the catalytic core - and F(0) - the membrane proton channel. F(1) has five subunits: alpha(3), beta(3), gamma(1), delta(1), epsilon(1). F(0) has four main subunits: a(1), b(1), b'(1) and c(10-14). The alpha and beta chains form an alternating ring which encloses part of the gamma chain. F(1) is attached to F(0) by a central stalk formed by the gamma and epsilon chains, while a peripheral stalk is formed by the delta, b and b' chains.

The protein localises to the plastid. It localises to the chloroplast thylakoid membrane. Functionally, f(1)F(0) ATP synthase produces ATP from ADP in the presence of a proton or sodium gradient. F-type ATPases consist of two structural domains, F(1) containing the extramembraneous catalytic core and F(0) containing the membrane proton channel, linked together by a central stalk and a peripheral stalk. During catalysis, ATP synthesis in the catalytic domain of F(1) is coupled via a rotary mechanism of the central stalk subunits to proton translocation. In terms of biological role, key component of the F(0) channel; it plays a direct role in translocation across the membrane. A homomeric c-ring of between 10-14 subunits forms the central stalk rotor element with the F(1) delta and epsilon subunits. In Mesostigma viride (Green alga), this protein is ATP synthase subunit c, chloroplastic.